Consider the following 242-residue polypeptide: Protein GrpE (242 aa).

Disordered regions lie at residues 1–75 (MSDD…DDEL) and 93–136 (VADL…QQIK). Low complexity predominate over residues 23 to 37 (DAESSAAEDASAADD). The segment covering 38 to 49 (AAPEESTGDEQA) has biased composition (acidic residues). Over residues 50–64 (GETTAESSDAESVTV) the composition is skewed to polar residues. A compositionally biased stretch (acidic residues) spans 96-108 (LETERDEAEETAS). A compositionally biased stretch (basic residues) spans 124 to 133 (YKKRAKKRQQ).

It belongs to the GrpE family. As to quaternary structure, homodimer.

Its subcellular location is the cytoplasm. Functionally, participates actively in the response to hyperosmotic and heat shock by preventing the aggregation of stress-denatured proteins, in association with DnaK and GrpE. It is the nucleotide exchange factor for DnaK and may function as a thermosensor. Unfolded proteins bind initially to DnaJ; upon interaction with the DnaJ-bound protein, DnaK hydrolyzes its bound ATP, resulting in the formation of a stable complex. GrpE releases ADP from DnaK; ATP binding to DnaK triggers the release of the substrate protein, thus completing the reaction cycle. Several rounds of ATP-dependent interactions between DnaJ, DnaK and GrpE are required for fully efficient folding. This is Protein GrpE from Haloferax mediterranei (strain ATCC 33500 / DSM 1411 / JCM 8866 / NBRC 14739 / NCIMB 2177 / R-4) (Halobacterium mediterranei).